Here is a 250-residue protein sequence, read N- to C-terminus: Neurotrophic factor BDNF precursor form (250 aa).

The signal sequence occupies residues 1 to 18 (MTILFLTMVISYFGCMKA). Residues 19–131 (APMKEANLRA…AANMSMRVRR (113 aa)) constitute a propeptide that is removed on maturation. 3 disulfide bridges follow: cysteine 144–cysteine 211, cysteine 189–cysteine 240, and cysteine 199–cysteine 242.

The protein belongs to the NGF-beta family. In terms of assembly, monomers and homodimers. Binds to NTRK2/TRKB. Can form heterodimers with other neurotrophin family members, such as NTF3 and NTF4 (in vitro), but the physiological relevance of this is not clear. BDNF precursor form: interacts with the heterodimer formed by NGFR and SORCS2. Mature BDNF has much lower affinity for the heterodimer formed by NGFR and SORCS2. Post-translationally, N-glycosylated and glycosulfated, contrary to mature BDNF. In terms of processing, mature BDNF is produced by proteolytic removal of the propeptide, catalyzed by a FURIN family member. In addition, the precursor form is proteolytically cleaved within the propeptide, but this is not an obligatory intermediate for the production of mature BDNF. Can be converted into mature BDNF by plasmin (PLG).

It is found in the secreted. Functionally, important signaling molecule that activates signaling cascades downstream of NTRK2. During development, promotes the survival and differentiation of selected neuronal populations of the peripheral and central nervous systems. Participates in axonal growth, pathfinding and in the modulation of dendritic growth and morphology. Major regulator of synaptic transmission and plasticity at adult synapses in many regions of the CNS. The versatility of BDNF is emphasized by its contribution to a range of adaptive neuronal responses including long-term potentiation (LTP), long-term depression (LTD), certain forms of short-term synaptic plasticity, as well as homeostatic regulation of intrinsic neuronal excitability. In terms of biological role, important signaling molecule that activates signaling cascades downstream of NTRK2. Activates signaling cascades via the heterodimeric receptor formed by NGFR and SORCS2. Signaling via NGFR and SORCS2 plays a role in synaptic plasticity and long-term depression (LTD). Binding to NGFR and SORCS2 promotes neuronal apoptosis. Promotes neuronal growth cone collapse. This chain is Neurotrophic factor BDNF precursor form (BDNF), found in Bos taurus (Bovine).